Here is a 443-residue protein sequence, read N- to C-terminus: Transcriptional adapter 2-alpha (443 aa).

Residue P6 is modified to Phosphoserine; in variant Ser-6. Residues 12 to 69 (SDKPPCRGCSSYLMEPYIKCAECGPPPFFLCLQCFTRGFEYKKHQSDHTYEIMTSDFP) form a ZZ-type zinc finger. 8 residues coordinate Zn(2+): C17, C20, C31, C34, C42, C45, H55, and H59. Positions 70-122 (VLDPSWTAQEEMALLEAVMDCGFGNWQDVANQMCTKTKEECEKHYMKHFINNP) constitute an SANT domain. Glycyl lysine isopeptide (Lys-Gly) (interchain with G-Cter in SUMO2) cross-links involve residues K132 and K138. Residues 348–372 (SPSIPMASNSGRRSAPPLNLTGLPG) form a disordered region. The 88-residue stretch at 356–443 (NSGRRSAPPL…LIREGYITKG (88 aa)) folds into the SWIRM domain. Residues 426–435 (KTRKIYDFLI) mediate DNA binding.

In terms of assembly, interacts with GCN5 and NR3C1. Associated with the P/CAF protein in the PCAF complex. Component of the PCAF complex, at least composed of TADA2L/ADA2, TADA3L/ADA3, TAF5L/PAF65-beta, TAF6L/PAF65-alpha, TAF10/TAFII30, TAF12/TAFII20, TAF9/TAFII31 and TRRAP. Component of the ADA2A-containing complex (ATAC), composed of KAT14, KAT2A, TADA2L, TADA3L, ZZ3, MBIP, WDR5, YEATS2, CCDC101 and DR1. Interacts with CCDC134. Expressed in all tissues, but most abundantly in testis.

The protein resides in the nucleus. It localises to the chromosome. Functionally, component of the ATAC complex, a complex with histone acetyltransferase activity on histones H3 and H4. Required for the function of some acidic activation domains, which activate transcription from a distant site. Binds double-stranded DNA. Binds dinucleosomes, probably at the linker region between neighboring nucleosomes. Plays a role in chromatin remodeling. May promote TP53/p53 'Lys-321' acetylation, leading to reduced TP53 stability and transcriptional activity. May also promote XRCC6 acetylation thus facilitating cell apoptosis in response to DNA damage. This chain is Transcriptional adapter 2-alpha (TADA2A), found in Homo sapiens (Human).